The sequence spans 283 residues: Protein MGARP (283 aa).

Positions 1-36 (MYLRRAVSKTLALPRRAPPGPAPLGKDASLRRMSSR) are disordered. Residues 1–41 (MYLRRAVSKTLALPRRAPPGPAPLGKDASLRRMSSRKFPGT) are Cytoplasmic-facing. Residues 42–64 (SGSNMIYYLVVGVTVSAGGYYTY) traverse the membrane as a helical; Anchor for type IV membrane protein segment. Over 65 to 283 (KALTSKQVRR…VTEETASPQG (219 aa)) the chain is Mitochondrial intermembrane. 2 disordered regions span residues 78-101 (VAEP…EHVA) and 118-283 (AESV…SPQG). A compositionally biased stretch (low complexity) spans 128 to 160 (EAAVVLPEESQASAPSEVPAEAAVVEASLSSSE). Composition is skewed to polar residues over residues 171–184 (VETT…TQEV) and 199–220 (ADTS…QEGA). Residues 221-245 (DTTKEEADNSKEAEGTTTEDPRSIS) are compositionally biased toward basic and acidic residues.

In terms of assembly, interacts with RHOT1/Miro-1, RHOT2/Miro-2, TRAK1/OIP106 and TRAK2/GRIF1. As to expression, expressed in the ovary, testis, brain, adrenal glands and the compartments of the visual nervous system. Expressed in corneal endothelium (CE) (at protein level). Expressed in steroidogenic tissues with the highest level of expression observed in the adrenal gland. Weakly expressed in placenta. Weakly expressed in astrocytes and neurons under normoxia. Strongly expressed in astrocytes and neurons under hypoxia. Expressed in each layer of the retina, with particularly higher staining in the inner segment of the photoreceptor (IS), the outer plexiform layer (OPL) and the ganglion cell layer (GCL).

The protein resides in the mitochondrion. It localises to the mitochondrion outer membrane. It is found in the mitochondrion inner membrane. In terms of biological role, plays a role in the trafficking of mitochondria along microtubules. Regulates the kinesin-mediated axonal transport of mitochondria to nerve terminals along microtubules during hypoxia. Participates in the translocation of TRAK2/GRIF1 from the cytoplasm to the mitochondrion. Also plays a role in steroidogenesis through maintenance of mitochondrial abundance and morphology. Plays an inhibitory role during neocortex development by regulating mitochondrial morphology, distribution and motility in neocortical neurons. The protein is Protein MGARP (Mgarp) of Mus musculus (Mouse).